Reading from the N-terminus, the 715-residue chain is Scinderin (715 aa).

Residues Met-1 to Glu-363 form an actin-severing region. Residues Leu-27–Ala-77 form a Gelsolin-like 1 repeat. Phosphotyrosine is present on Tyr-102. Residues Lys-112–Ala-119 and Arg-138–Arg-146 contribute to the a 1,2-diacyl-sn-glycero-3-phospho-(1D-myo-inositol-4,5-bisphosphate) site. 4 Gelsolin-like repeats span residues Val-148–Leu-188, Leu-265–Lys-307, Val-398–Thr-451, and Thr-523–Lys-564. The interval Lys-364–Trp-715 is actin-binding, Ca-sensitive. Residues Lys-364–Trp-715 form a ca(2+)-dependent actin binding region. Residues Asn-538, Asp-539, and Glu-562 each coordinate Ca(2+). Tyr-599 is subject to Phosphotyrosine. One copy of the Gelsolin-like 6 repeat lies at Phe-626–Ser-668. Ca(2+)-binding residues include Asp-643, Asp-644, and Glu-666.

It belongs to the villin/gelsolin family. Post-translationally, the N-terminus is blocked. In the adrenal gland, expressed in the medulla but, in the cortex, found only in diffuse parts.

It localises to the cytoplasm. The protein resides in the cytoskeleton. Its subcellular location is the cell projection. The protein localises to the podosome. Functionally, ca(2+)-dependent actin filament-severing protein that has a regulatory function in exocytosis by affecting the organization of the microfilament network underneath the plasma membrane. In vitro, also has barbed end capping and nucleating activities in the presence of Ca(2+). Severing activity is inhibited by phosphatidylinositol 4,5-bis-phosphate (PIP2). Required for megakaryocyte differentiation, maturation, polyploidization and apoptosis with the release of platelet-like particles. Plays a role in osteoclastogenesis (OCG) and actin cytoskeletal organization in osteoclasts. Regulates chondrocyte proliferation and differentiation. Inhibits cell proliferation and tumorigenesis. Signaling is mediated by MAPK, p38 and JNK pathways. The chain is Scinderin from Bos taurus (Bovine).